We begin with the raw amino-acid sequence, 349 residues long: Fe(3+) ions import ATP-binding protein FbpC (349 aa).

In terms of domain architecture, ABC transporter spans 4-236; that stretch reads LELHHIGKSY…PVDEPTATFL (233 aa). 36-43 lines the ATP pocket; it reads GPSGSGKT.

It belongs to the ABC transporter superfamily. Fe(3+) ion importer (TC 3.A.1.10) family. In terms of assembly, the complex is composed of two ATP-binding proteins (FbpC), two transmembrane proteins (FbpB) and a solute-binding protein (FbpA).

It localises to the cell inner membrane. The catalysed reaction is Fe(3+)(out) + ATP + H2O = Fe(3+)(in) + ADP + phosphate + H(+). Part of the ABC transporter complex FbpABC involved in Fe(3+) ions import. Responsible for energy coupling to the transport system. This Yersinia pestis bv. Antiqua (strain Antiqua) protein is Fe(3+) ions import ATP-binding protein FbpC.